Here is a 589-residue protein sequence, read N- to C-terminus: Probable translation initiation factor IF-2 (589 aa).

The region spanning 4–225 (VRSPFVVVMG…AGVSQRFIPR (222 aa)) is the tr-type G domain. The interval 13–20 (GHVDVGKT) is G1. 13-20 (GHVDVGKT) is a binding site for GTP. The G2 stretch occupies residues 38-42 (MITQH). The segment at 79 to 82 (DTPG) is G3. Residues 79-83 (DTPGH) and 133-136 (NKLD) each bind GTP. The G4 stretch occupies residues 133–136 (NKLD). A G5 region spans residues 201-203 (SAV).

This sequence belongs to the TRAFAC class translation factor GTPase superfamily. Classic translation factor GTPase family. IF-2 subfamily.

Its function is as follows. Function in general translation initiation by promoting the binding of the formylmethionine-tRNA to ribosomes. Seems to function along with eIF-2. The polypeptide is Probable translation initiation factor IF-2 (Pyrobaculum aerophilum (strain ATCC 51768 / DSM 7523 / JCM 9630 / CIP 104966 / NBRC 100827 / IM2)).